We begin with the raw amino-acid sequence, 274 residues long: Large ribosomal subunit protein uL2 (274 aa).

Disordered regions lie at residues 28-55 (APHAPLLEKKSKSGGRNNNGRITTRHVG) and 224-274 (VAMN…RRRK).

The protein belongs to the universal ribosomal protein uL2 family. Part of the 50S ribosomal subunit. Forms a bridge to the 30S subunit in the 70S ribosome.

Its function is as follows. One of the primary rRNA binding proteins. Required for association of the 30S and 50S subunits to form the 70S ribosome, for tRNA binding and peptide bond formation. It has been suggested to have peptidyltransferase activity; this is somewhat controversial. Makes several contacts with the 16S rRNA in the 70S ribosome. The protein is Large ribosomal subunit protein uL2 of Pseudomonas putida (strain W619).